The following is a 246-amino-acid chain: Uridylate kinase (246 aa).

Residue 18 to 21 (KLSG) coordinates ATP. Residue Gly-60 participates in UMP binding. Residues Gly-61 and Arg-65 each contribute to the ATP site. UMP contacts are provided by residues Asp-80 and 141 to 148 (TGNPFFTT). 3 residues coordinate ATP: Thr-168, Tyr-174, and Asp-177.

It belongs to the UMP kinase family. As to quaternary structure, homohexamer.

The protein localises to the cytoplasm. It carries out the reaction UMP + ATP = UDP + ADP. It functions in the pathway pyrimidine metabolism; CTP biosynthesis via de novo pathway; UDP from UMP (UMPK route): step 1/1. Its activity is regulated as follows. Inhibited by UTP. Its function is as follows. Catalyzes the reversible phosphorylation of UMP to UDP. This chain is Uridylate kinase, found in Pseudomonas syringae pv. syringae (strain B728a).